The sequence spans 379 residues: UDP-4-amino-4-deoxy-L-arabinose--oxoglutarate aminotransferase (379 aa).

Lys-182 is subject to N6-(pyridoxal phosphate)lysine.

Belongs to the DegT/DnrJ/EryC1 family. ArnB subfamily. In terms of assembly, homodimer. Requires pyridoxal 5'-phosphate as cofactor.

It catalyses the reaction UDP-4-amino-4-deoxy-beta-L-arabinose + 2-oxoglutarate = UDP-beta-L-threo-pentopyranos-4-ulose + L-glutamate. The protein operates within nucleotide-sugar biosynthesis; UDP-4-deoxy-4-formamido-beta-L-arabinose biosynthesis; UDP-4-deoxy-4-formamido-beta-L-arabinose from UDP-alpha-D-glucuronate: step 2/3. It participates in bacterial outer membrane biogenesis; lipopolysaccharide biosynthesis. In terms of biological role, catalyzes the conversion of UDP-4-keto-arabinose (UDP-Ara4O) to UDP-4-amino-4-deoxy-L-arabinose (UDP-L-Ara4N). The modified arabinose is attached to lipid A and is required for resistance to polymyxin and cationic antimicrobial peptides. The sequence is that of UDP-4-amino-4-deoxy-L-arabinose--oxoglutarate aminotransferase from Salmonella dublin (strain CT_02021853).